A 150-amino-acid polypeptide reads, in one-letter code: UPF0178 protein Bcep18194_A4809 (150 aa).

It belongs to the UPF0178 family.

This chain is UPF0178 protein Bcep18194_A4809, found in Burkholderia lata (strain ATCC 17760 / DSM 23089 / LMG 22485 / NCIMB 9086 / R18194 / 383).